We begin with the raw amino-acid sequence, 183 residues long: Small ribosomal subunit protein cS23y (183 aa).

Belongs to the chloroplast-specific ribosomal protein cS23 family. In terms of assembly, part of the 30S ribosomal subunit.

The protein resides in the plastid. It localises to the chloroplast. Functionally, component of the chloroplast ribosome (chloro-ribosome), a dedicated translation machinery responsible for the synthesis of chloroplast genome-encoded proteins, including proteins of the transcription and translation machinery and components of the photosynthetic apparatus. This Arabidopsis thaliana (Mouse-ear cress) protein is Small ribosomal subunit protein cS23y.